The chain runs to 92 residues: Defensin-like protein 249 (92 aa).

The first 24 residues, 1-24 (MKLAAIFLASSVLLSLLPIHLSQG), serve as a signal peptide directing secretion. 4 disulfide bridges follow: C34–C91, C45–C74, C53–C84, and C72–C86.

This sequence belongs to the DEFL family.

The protein localises to the secreted. This Arabidopsis thaliana (Mouse-ear cress) protein is Defensin-like protein 249 (SCRL7).